The chain runs to 272 residues: Indole-3-glycerol phosphate synthase (272 aa).

The protein belongs to the TrpC family.

It catalyses the reaction 1-(2-carboxyphenylamino)-1-deoxy-D-ribulose 5-phosphate + H(+) = (1S,2R)-1-C-(indol-3-yl)glycerol 3-phosphate + CO2 + H2O. It functions in the pathway amino-acid biosynthesis; L-tryptophan biosynthesis; L-tryptophan from chorismate: step 4/5. This Arthrobacter sp. (strain FB24) protein is Indole-3-glycerol phosphate synthase.